The primary structure comprises 416 residues: UDP-N-acetylmuramoylalanine--D-glutamate ligase (416 aa).

108-114 provides a ligand contact to ATP; the sequence is GTVGKTT.

It belongs to the MurCDEF family.

It is found in the cytoplasm. It catalyses the reaction UDP-N-acetyl-alpha-D-muramoyl-L-alanine + D-glutamate + ATP = UDP-N-acetyl-alpha-D-muramoyl-L-alanyl-D-glutamate + ADP + phosphate + H(+). Its pathway is cell wall biogenesis; peptidoglycan biosynthesis. In terms of biological role, cell wall formation. Catalyzes the addition of glutamate to the nucleotide precursor UDP-N-acetylmuramoyl-L-alanine (UMA). In Chlamydia muridarum (strain MoPn / Nigg), this protein is UDP-N-acetylmuramoylalanine--D-glutamate ligase.